Here is a 467-residue protein sequence, read N- to C-terminus: Putative ankyrin repeat protein R911 (467 aa).

14 ANK repeats span residues 38–70 (IKTD…PIIV), 79–108 (TLNK…DIRA), 109–138 (GNDY…DIRA), 140–168 (NDYA…NIRA), 170–198 (NDHA…DIRS), 199–228 (DNDY…NIRS), 229–258 (DNDY…DIKS), 260–288 (NDYA…NIRV), 289–318 (NNNY…DIIA), 320–348 (NNFA…DIKS), 350–378 (NDYA…DIRV), 379–408 (ENDY…DIRS), 410–438 (NDYA…DIKA), and 440–467 (DDYA…AVLS).

The protein is Putative ankyrin repeat protein R911 of Acanthamoeba polyphaga mimivirus (APMV).